A 517-amino-acid chain; its full sequence is Probable G-protein coupled receptor Mth-like 4 (517 aa).

A signal peptide spans 1–18; that stretch reads MRILLIAVLFLLMPKSNA. Over 19-212 the chain is Extracellular; sequence EIPGCDFFDT…LSSEHSRTWK (194 aa). 5 disulfides stabilise this stretch: C23-C77, C79-C84, C88-C183, C89-C100, and C145-C201. A glycan (N-linked (GlcNAc...) asparagine) is linked at N39. Residues N117 and N165 are each glycosylated (N-linked (GlcNAc...) asparagine). The helical transmembrane segment at 213–233 threads the bilayer; the sequence is TVAIVISLICIILTISVYLYV. The Cytoplasmic portion of the chain corresponds to 234–242; sequence EKLRNLHGK. The helical transmembrane segment at 243-263 threads the bilayer; sequence CFICYLASLFLGYFFLVLNVW. Residues 264–272 are Extracellular-facing; the sequence is KYSSGFCVT. The helical transmembrane segment at 273 to 293 threads the bilayer; the sequence is AGFLGYFSVMAAFFWLSVIGI. The Cytoplasmic portion of the chain corresponds to 294-319; it reads HLRIKFSLASNCLHRLLPENPFRAYN. A helical membrane pass occupies residues 320-340; the sequence is LYAWGIPLIMTAITYTADQVV. Residues 341–363 are Extracellular-facing; it reads KNEKLRPRVGVGKNCWIYTGDMT. Residues 364–384 form a helical membrane-spanning segment; it reads VMIYFYGPMLLLIAFNIIMFV. Topologically, residues 385-414 are cytoplasmic; the sequence is LSAIYIYNIKKNVKGLVHKQQTNQQINDQQ. A helical transmembrane segment spans residues 415-435; sequence MFAIFLRLFILMGLSWSFEIL. Residues 436–459 are Extracellular-facing; the sequence is SFLLTKQQAWARALMVADYFNWSQ. N456 is a glycosylation site (N-linked (GlcNAc...) asparagine). The helical transmembrane segment at 460–480 threads the bilayer; that stretch reads GTIIFVLFILKPSILKLIIAG. Over 481–517 the chain is Cytoplasmic; that stretch reads GRQNLPGSHHNSRSKAARYNSTHTACEGSIADPNAYC.

The protein belongs to the G-protein coupled receptor 2 family. Mth subfamily.

It is found in the cell membrane. In Drosophila melanogaster (Fruit fly), this protein is Probable G-protein coupled receptor Mth-like 4 (mthl4).